The chain runs to 394 residues: Sorting nexin-3 (394 aa).

Disordered regions lie at residues 1–82 (MAFY…FGGA) and 116–226 (LGGA…SATA). 2 stretches are compositionally biased toward low complexity: residues 31-82 (AAPG…FGGA) and 131-178 (AHSS…AFPS). The segment covering 179 to 207 (GVSTSQYQPTSQGAQGASRFQSHTPSTLL) has biased composition (polar residues). Positions 272-389 (NFLEVEVRSP…AAFLQDSGWS (118 aa)) constitute a PX domain. A 1,2-diacyl-sn-glycero-3-phospho-(1D-myo-inositol-3-phosphate) contacts are provided by Arg315, Ser317, Lys341, Arg346, and Arg355.

Belongs to the sorting nexin family.

It is found in the cytoplasm. The protein localises to the golgi apparatus membrane. Its subcellular location is the prevacuolar compartment membrane. In terms of biological role, required for retention of late Golgi membrane proteins. Component of the retrieval machinery that functions by direct interaction with the cytosolic tails of certain TGN membrane proteins during the sorting/budding process at the prevacuolar compartment. Binds phosphatidylinositol 3-phosphate (PtdIns(P3)). The protein is Sorting nexin-3 (SNX3) of Mycosarcoma maydis (Corn smut fungus).